Consider the following 42-residue polypeptide: Photosystem II reaction center protein J (42 aa).

A helical membrane pass occupies residues 10–30 (IPLWLVATVAGLAVIALLGVF).

Belongs to the PsbJ family. PSII is composed of 1 copy each of membrane proteins PsbA, PsbB, PsbC, PsbD, PsbE, PsbF, PsbH, PsbI, PsbJ, PsbK, PsbL, PsbM, PsbT, PsbX, PsbY, PsbZ, Psb30/Ycf12, at least 3 peripheral proteins of the oxygen-evolving complex and a large number of cofactors. It forms dimeric complexes.

The protein localises to the plastid. The protein resides in the chloroplast thylakoid membrane. Its function is as follows. One of the components of the core complex of photosystem II (PSII). PSII is a light-driven water:plastoquinone oxidoreductase that uses light energy to abstract electrons from H(2)O, generating O(2) and a proton gradient subsequently used for ATP formation. It consists of a core antenna complex that captures photons, and an electron transfer chain that converts photonic excitation into a charge separation. The protein is Photosystem II reaction center protein J of Chlorokybus atmophyticus (Soil alga).